We begin with the raw amino-acid sequence, 334 residues long: UDP-N-acetylglucosamine--N-acetylmuramyl-(pentapeptide) pyrophosphoryl-undecaprenol N-acetylglucosamine transferase (334 aa).

Residues 11-13, N125, S185, I229, and Q274 contribute to the UDP-N-acetyl-alpha-D-glucosamine site; that span reads TGG.

This sequence belongs to the glycosyltransferase 28 family. MurG subfamily.

It localises to the cell inner membrane. It carries out the reaction di-trans,octa-cis-undecaprenyl diphospho-N-acetyl-alpha-D-muramoyl-L-alanyl-D-glutamyl-meso-2,6-diaminopimeloyl-D-alanyl-D-alanine + UDP-N-acetyl-alpha-D-glucosamine = di-trans,octa-cis-undecaprenyl diphospho-[N-acetyl-alpha-D-glucosaminyl-(1-&gt;4)]-N-acetyl-alpha-D-muramoyl-L-alanyl-D-glutamyl-meso-2,6-diaminopimeloyl-D-alanyl-D-alanine + UDP + H(+). It functions in the pathway cell wall biogenesis; peptidoglycan biosynthesis. Cell wall formation. Catalyzes the transfer of a GlcNAc subunit on undecaprenyl-pyrophosphoryl-MurNAc-pentapeptide (lipid intermediate I) to form undecaprenyl-pyrophosphoryl-MurNAc-(pentapeptide)GlcNAc (lipid intermediate II). The sequence is that of UDP-N-acetylglucosamine--N-acetylmuramyl-(pentapeptide) pyrophosphoryl-undecaprenol N-acetylglucosamine transferase from Thermosipho melanesiensis (strain DSM 12029 / CIP 104789 / BI429).